The following is a 483-amino-acid chain: Cysteine proteinase 1, mitochondrial (483 aa).

The N-terminal 30 residues, Met-1–Met-30, are a transit peptide targeting the mitochondrion. Catalysis depends on residues Cys-102, His-398, and Asn-421. Residue Lys-483 is a propeptide, removed in mature form; by autocatalysis.

The protein belongs to the peptidase C1 family. As to quaternary structure, homohexamer. Binds to nucleic acids. Binds single-stranded DNA and RNA with higher affinity than double-stranded DNA. The N-terminus of isoform Cytoplasmic is blocked.

It localises to the mitochondrion. Its subcellular location is the cytoplasm. It carries out the reaction Inactivates bleomycin B2 (a cytotoxic glycometallopeptide) by hydrolysis of a carboxyamide bond of beta-aminoalanine, but also shows general aminopeptidase activity. The specificity varies somewhat with source, but amino acid arylamides of Met, Leu and Ala are preferred.. Inhibited by E64, a specific inhibitor of cysteine proteases, N-ethylmaleimide, iodacetamide, and mercury and zinc ions. In terms of biological role, the normal physiological role of the enzyme is unknown, but it is not essential for the viability of yeast cells. Has aminopeptidase activity, shortening substrate peptides sequentially by 1 amino acid. Has bleomycin hydrolase activity, which can protect the cell from the toxic effects of bleomycin. Has homocysteine-thiolactonase activity, protecting the cell against homocysteine toxicity. Acts as a repressor in the GAL4 regulatory system, but this does not require either the peptidase or nucleic acid-binding activities. The polypeptide is Cysteine proteinase 1, mitochondrial (LAP3) (Saccharomyces cerevisiae (strain YJM789) (Baker's yeast)).